Reading from the N-terminus, the 409-residue chain is Argininosuccinate synthase (409 aa).

Residues 8–16 (AYSGGLDTS) and A34 contribute to the ATP site. Y85 contacts L-citrulline. Residue G115 coordinates ATP. Residues T117, N121, and D122 each contribute to the L-aspartate site. L-citrulline is bound at residue N121. 5 residues coordinate L-citrulline: R125, S178, S187, E268, and Y280.

It belongs to the argininosuccinate synthase family. Type 1 subfamily. Homotetramer.

The protein localises to the cytoplasm. It catalyses the reaction L-citrulline + L-aspartate + ATP = 2-(N(omega)-L-arginino)succinate + AMP + diphosphate + H(+). It functions in the pathway amino-acid biosynthesis; L-arginine biosynthesis; L-arginine from L-ornithine and carbamoyl phosphate: step 2/3. The polypeptide is Argininosuccinate synthase (Thermotoga sp. (strain RQ2)).